The primary structure comprises 88 residues: DNA-directed RNA polymerase subunit omega (88 aa).

This sequence belongs to the RNA polymerase subunit omega family. In terms of assembly, the RNAP catalytic core consists of 2 alpha, 1 beta, 1 beta' and 1 omega subunit. When a sigma factor is associated with the core the holoenzyme is formed, which can initiate transcription.

It catalyses the reaction RNA(n) + a ribonucleoside 5'-triphosphate = RNA(n+1) + diphosphate. Promotes RNA polymerase assembly. Latches the N- and C-terminal regions of the beta' subunit thereby facilitating its interaction with the beta and alpha subunits. The protein is DNA-directed RNA polymerase subunit omega of Salinispora arenicola (strain CNS-205).